Reading from the N-terminus, the 38-residue chain is Large ribosomal subunit protein bL36 (38 aa).

Belongs to the bacterial ribosomal protein bL36 family.

This is Large ribosomal subunit protein bL36 from Thermotoga maritima (strain ATCC 43589 / DSM 3109 / JCM 10099 / NBRC 100826 / MSB8).